The following is a 349-amino-acid chain: Isopentenyl-diphosphate delta-isomerase (349 aa).

Position 6-7 (6-7 (RK)) interacts with substrate. FMN is bound by residues 62-64 (AMT), serine 93, and asparagine 122. Glutamine 152 provides a ligand contact to substrate. Residue glutamate 153 participates in Mg(2+) binding. Residues lysine 184, threonine 214, 258-259 (GG), and 280-281 (AG) contribute to the FMN site.

This sequence belongs to the IPP isomerase type 2 family. As to quaternary structure, homooctamer. Dimer of tetramers. FMN is required as a cofactor. The cofactor is NADPH. Mg(2+) serves as cofactor.

The protein localises to the cytoplasm. The enzyme catalyses isopentenyl diphosphate = dimethylallyl diphosphate. In terms of biological role, involved in the biosynthesis of isoprenoids. Catalyzes the 1,3-allylic rearrangement of the homoallylic substrate isopentenyl (IPP) to its allylic isomer, dimethylallyl diphosphate (DMAPP). The sequence is that of Isopentenyl-diphosphate delta-isomerase from Bacillus cereus (strain ATCC 14579 / DSM 31 / CCUG 7414 / JCM 2152 / NBRC 15305 / NCIMB 9373 / NCTC 2599 / NRRL B-3711).